The chain runs to 376 residues: NIF3-like protein 1 (376 aa).

K108 is modified (N6-acetyllysine). The interval 243–376 (LLLHTGMGRL…ETDRDPLRVV (134 aa)) is mediates interaction with COPS2. A Phosphothreonine modification is found at T254. S258 carries the post-translational modification Phosphoserine.

The protein belongs to the GTP cyclohydrolase I type 2/NIF3 family. In terms of assembly, homodimer. Interacts with COPS2. Interacts with THOC7. Ubiquitous. Detected in all tissues tested with higher expression in cerebellum, heart and kidney and to a lower level in cerebrum, lung, liver, spleen and muscle.

The protein localises to the cytoplasm. It localises to the nucleus. In terms of biological role, may function as a transcriptional corepressor through its interaction with COPS2, negatively regulating the expression of genes involved in neuronal differentiation. The protein is NIF3-like protein 1 of Mus musculus (Mouse).